The chain runs to 371 residues: MERISFGAFLSPLHPLGEDPGLSLWRDLELAEWLDQFGYEELWVGEHHSAGWGTISSPELFIATAAERTRRIRLGTGVVSLPYHHPFMVASRAVQLDHLTGGRFTLGVGAGSIPSDMHFLGIDPADTRRRTAESLDVIHRLLTGDEPVTRVTDWFELHDARLQLRPRRASGLPLAVSSAVSPFGMRLAGQYGAAPLSFGVPPRPGSSVDDLAAQWQHAVDSAAEHGRTIDRADWRVALSVHVADSREQALDDLVDGWMRYRNEYWALLGTPPVHSRTEARKALAELIDRRSTIVGSVDECIDAVRDVQEATGGFGRLLVNVLDWADREAMKRSFELFARFVAPRFNGSLDGVTASYGWVAEQARAQRAAAR.

Belongs to the bacterial luciferase oxidoreductase family. Requires FMN as cofactor.

The catalysed reaction is 4-hydroxyprotoasukamycin + NADH + O2 + H(+) = asukamycin + NAD(+) + H2O. Its pathway is antibiotic biosynthesis. In terms of biological role, involved in the biosynthesis of the antibiotic asukamycin. Catalyzes the epoxidation of 4-hydroxyprotoasukamycin to the final product, asukamycin. Can also convert some 4-hydroxyprotoasukamycin derivatives to their asukamycin derivatives, but cannot use protoasukamycin as substrate. Can also use NADPH, but catalytic efficiency is 20-fold higher with NADH. The chain is 4-hydroxyprotoasukamycin monooxygenase from Streptomyces nodosus subsp. asukaensis.